Consider the following 309-residue polypeptide: Homoserine O-succinyltransferase (309 aa).

Cysteine 142 (acyl-thioester intermediate) is an active-site residue. Residues lysine 163 and serine 192 each coordinate substrate. Histidine 235 functions as the Proton acceptor in the catalytic mechanism. Glutamate 237 is an active-site residue. Residue arginine 249 participates in substrate binding.

Belongs to the MetA family. As to quaternary structure, homodimer.

It is found in the cytoplasm. It carries out the reaction L-homoserine + succinyl-CoA = O-succinyl-L-homoserine + CoA. It functions in the pathway amino-acid biosynthesis; L-methionine biosynthesis via de novo pathway; O-succinyl-L-homoserine from L-homoserine: step 1/1. Its function is as follows. Transfers a succinyl group from succinyl-CoA to L-homoserine, forming succinyl-L-homoserine. This Escherichia coli O157:H7 protein is Homoserine O-succinyltransferase.